Reading from the N-terminus, the 51-residue chain is Large ribosomal subunit protein eL39 (51 aa).

The protein belongs to the eukaryotic ribosomal protein eL39 family.

The sequence is that of Large ribosomal subunit protein eL39 from Saccharolobus islandicus (strain L.S.2.15 / Lassen #1) (Sulfolobus islandicus).